Here is a 178-residue protein sequence, read N- to C-terminus: MTLKTRYKETIRPKLLKDLGLKNIHQVPKVIKVNVNRGLGEAASNSKALEASLNEMATITGQKALVTRSKKAIAGFKIREGMAIGCTVTLRGDRMYSFLERFINLALPRIRDFRGVNPKSFDGRGNYTLGVKEQLIFPEISFDKIDSIRGMDITIVTSASNDQEGKALLKELGMPFSN.

The protein belongs to the universal ribosomal protein uL5 family. As to quaternary structure, part of the 50S ribosomal subunit; part of the 5S rRNA/L5/L18/L25 subcomplex. Contacts the 5S rRNA and the P site tRNA. Forms a bridge to the 30S subunit in the 70S ribosome.

In terms of biological role, this is one of the proteins that bind and probably mediate the attachment of the 5S RNA into the large ribosomal subunit, where it forms part of the central protuberance. In the 70S ribosome it contacts protein S13 of the 30S subunit (bridge B1b), connecting the 2 subunits; this bridge is implicated in subunit movement. Contacts the P site tRNA; the 5S rRNA and some of its associated proteins might help stabilize positioning of ribosome-bound tRNAs. The chain is Large ribosomal subunit protein uL5 from Prochlorococcus marinus (strain MIT 9515).